The sequence spans 735 residues: MPLAQLKEPWPLMELVPLDPENGQTSGEEAGLQPSKDEGVLKEISITHHVKAGSEKADPSHFELLKVLGQGSFGKVFLVRKVTRPDSGHLYAMKVLKKATLKVRDRVRTKMERDILADVNHPFVVKLHYAFQTEGKLYLILDFLRGGDLFTRLSKEVMFTEEDVKFYLAELALGLDHLHSLGIIYRDLKPENILLDEEGHIKLTDFGLSKEAIDHEKKAYSFCGTVEYMAPEVVNRQGHSHSADWWSYGVLMFEMLTGSLPFQGKDRKETMTLILKAKLGMPQFLSTEAQSLLRALFKRNPANRLGSGPDGAEEIKRHVFYSTIDWNKLYRREIKPPFKPAVAQPDDTFYFDTEFTSRTPKDSPGIPPSAGAHQLFRGFSFVATGLMEDDGKPRAPQAPLHSVVQQLHGKNLVFSDGYVVKETIGVGSYSECKRCVHKATNMEYAVKVIDKSKRDPSEEIEILLRYGQHPNIITLKDVYDDGKHVYLVTELMRGGELLDKILRQKFFSEREASFVLHTIGKTVEYLHSQGVVHRDLKPSNILYVDESGNPECLRICDFGFAKQLRAENGLLMTPCYTANFVAPEVLKRQGYDEGCDIWSLGILLYTMLAGYTPFANGPSDTPEEILTRIGSGKFTLSGGNWNTVSETAKDLVSKMLHVDPHQRLTAKQVLQHPWVTQKDKLPQSQLSHQDLQLVKGAMAATYSALNSSKPTPQLKPIESSILAQRRVRKLPSTTL.

Position 54 is a phosphoserine (Ser54). Residues Phe62–Tyr321 enclose the Protein kinase 1 domain. ATP-binding positions include Leu68–Val76 and Lys94. The active-site Proton acceptor is Asp187. Phosphoserine; by PDPK1 is present on Ser221. Residue Ser307 is modified to Phosphoserine. The region spanning Ser322–Gly391 is the AGC-kinase C-terminal domain. Thr359 is modified (phosphothreonine). Ser363 and Ser369 each carry phosphoserine. Residue Ser380 is modified to Phosphoserine; by autocatalysis. The 258-residue stretch at Tyr418–Val675 folds into the Protein kinase 2 domain. ATP-binding positions include Ile424–Cys432 and Lys447. Asp535 functions as the Proton acceptor in the catalytic mechanism. Position 573 is a phosphothreonine (Thr573). The residue at position 732 (Ser732) is a Phosphoserine.

Belongs to the protein kinase superfamily. AGC Ser/Thr protein kinase family. S6 kinase subfamily. As to quaternary structure, forms a complex with either MAPK1/ERK2 or MAPK3/ERK1 in quiescent cells. Transiently dissociates following mitogenic stimulation. Interacts with ETV1/ER81 and FGFR1. In terms of assembly, (Microbial infection) Interacts with Kaposi's sarcoma-associated herpesvirus/HHV-8 protein ORF45; this interaction allows RPS6KA1 activation. Requires Mg(2+) as cofactor. Activated by phosphorylation at Ser-221 by PDPK1. Autophosphorylated on Ser-380, as part of the activation process. May be phosphorylated at Thr-359 and Ser-363 by MAPK1/ERK2 and MAPK3/ERK1. In terms of processing, N-terminal myristoylation results in an activated kinase in the absence of added growth factors.

Its subcellular location is the nucleus. The protein localises to the cytoplasm. It carries out the reaction L-seryl-[protein] + ATP = O-phospho-L-seryl-[protein] + ADP + H(+). It catalyses the reaction L-threonyl-[protein] + ATP = O-phospho-L-threonyl-[protein] + ADP + H(+). With respect to regulation, upon extracellular signal or mitogen stimulation, phosphorylated at Thr-573 in the C-terminal kinase domain (CTKD) by MAPK1/ERK2 and MAPK3/ERK1. The activated CTKD then autophosphorylates Ser-380, allowing binding of PDPK1, which in turn phosphorylates Ser-221 in the N-terminal kinase domain (NTDK) leading to the full activation of the protein and subsequent phosphorylation of the substrates by the NTKD. Its function is as follows. Serine/threonine-protein kinase that acts downstream of ERK (MAPK1/ERK2 and MAPK3/ERK1) signaling and mediates mitogenic and stress-induced activation of the transcription factors CREB1, ETV1/ER81 and NR4A1/NUR77, regulates translation through RPS6 and EIF4B phosphorylation, and mediates cellular proliferation, survival, and differentiation by modulating mTOR signaling and repressing pro-apoptotic function of BAD and DAPK1. In fibroblast, is required for EGF-stimulated phosphorylation of CREB1, which results in the subsequent transcriptional activation of several immediate-early genes. In response to mitogenic stimulation (EGF and PMA), phosphorylates and activates NR4A1/NUR77 and ETV1/ER81 transcription factors and the cofactor CREBBP. Upon insulin-derived signal, acts indirectly on the transcription regulation of several genes by phosphorylating GSK3B at 'Ser-9' and inhibiting its activity. Phosphorylates RPS6 in response to serum or EGF via an mTOR-independent mechanism and promotes translation initiation by facilitating assembly of the pre-initiation complex. In response to insulin, phosphorylates EIF4B, enhancing EIF4B affinity for the EIF3 complex and stimulating cap-dependent translation. Is involved in the mTOR nutrient-sensing pathway by directly phosphorylating TSC2 at 'Ser-1798', which potently inhibits TSC2 ability to suppress mTOR signaling, and mediates phosphorylation of RPTOR, which regulates mTORC1 activity and may promote rapamycin-sensitive signaling independently of the PI3K/AKT pathway. Also involved in feedback regulation of mTORC1 and mTORC2 by phosphorylating DEPTOR. Mediates cell survival by phosphorylating the pro-apoptotic proteins BAD and DAPK1 and suppressing their pro-apoptotic function. Promotes the survival of hepatic stellate cells by phosphorylating CEBPB in response to the hepatotoxin carbon tetrachloride (CCl4). Mediates induction of hepatocyte prolifration by TGFA through phosphorylation of CEBPB. Is involved in cell cycle regulation by phosphorylating the CDK inhibitor CDKN1B, which promotes CDKN1B association with 14-3-3 proteins and prevents its translocation to the nucleus and inhibition of G1 progression. Phosphorylates EPHA2 at 'Ser-897', the RPS6KA-EPHA2 signaling pathway controls cell migration. In response to mTORC1 activation, phosphorylates EIF4B at 'Ser-406' and 'Ser-422' which stimulates bicarbonate cotransporter SLC4A7 mRNA translation, increasing SLC4A7 protein abundance and function. Functionally, (Microbial infection) Promotes the late transcription and translation of viral lytic genes during Kaposi's sarcoma-associated herpesvirus/HHV-8 infection, when constitutively activated. The polypeptide is Ribosomal protein S6 kinase alpha-1 (RPS6KA1) (Homo sapiens (Human)).